The primary structure comprises 195 residues: Glycerol-3-phosphate acyltransferase (195 aa).

4 consecutive transmembrane segments (helical) span residues I2–V22, A79–F99, V111–L131, and T146–L166.

The protein belongs to the PlsY family. Probably interacts with PlsX.

The protein resides in the cell membrane. The catalysed reaction is an acyl phosphate + sn-glycerol 3-phosphate = a 1-acyl-sn-glycero-3-phosphate + phosphate. It participates in lipid metabolism; phospholipid metabolism. Catalyzes the transfer of an acyl group from acyl-phosphate (acyl-PO(4)) to glycerol-3-phosphate (G3P) to form lysophosphatidic acid (LPA). This enzyme utilizes acyl-phosphate as fatty acyl donor, but not acyl-CoA or acyl-ACP. The polypeptide is Glycerol-3-phosphate acyltransferase (Alkaliphilus metalliredigens (strain QYMF)).